The chain runs to 351 residues: Photosystem II D2 protein (351 aa).

The chain crosses the membrane as a helical span at residues 39–59; the sequence is TAYLAIGGWLTGTTFVTSWYT. Residue His116 coordinates chlorophyll a. The chain crosses the membrane as a helical span at residues 123-139; sequence GFMLRQFEIARLVGIRP. Residues Gln128 and Asn141 each contribute to the pheophytin a site. A helical membrane pass occupies residues 151-164; sequence VFVSVFLMYPLGQS. Residue His196 coordinates chlorophyll a. Residues 206–226 traverse the membrane as a helical segment; the sequence is GALLCAIHGATVENTLFEDGE. A plastoquinone contacts are provided by His213 and Phe260. A Fe cation-binding site is contributed by His213. His267 lines the Fe cation pocket. The chain crosses the membrane as a helical span at residues 277-293; sequence GLWTSSIGIIGLALNLR.

It belongs to the reaction center PufL/M/PsbA/D family. As to quaternary structure, PSII is composed of 1 copy each of membrane proteins PsbA, PsbB, PsbC, PsbD, PsbE, PsbF, PsbH, PsbI, PsbJ, PsbK, PsbL, PsbM, PsbT, PsbX, PsbY, PsbZ, Psb30/Ycf12, peripheral proteins PsbO, CyanoQ (PsbQ), PsbU, PsbV and a large number of cofactors. It forms dimeric complexes. It depends on The D1/D2 heterodimer binds P680, chlorophylls that are the primary electron donor of PSII, and subsequent electron acceptors. It shares a non-heme iron and each subunit binds pheophytin, quinone, additional chlorophylls, carotenoids and lipids. There is also a Cl(-1) ion associated with D1 and D2, which is required for oxygen evolution. The PSII complex binds additional chlorophylls, carotenoids and specific lipids. as a cofactor.

Its subcellular location is the cellular thylakoid membrane. It catalyses the reaction 2 a plastoquinone + 4 hnu + 2 H2O = 2 a plastoquinol + O2. Photosystem II (PSII) is a light-driven water:plastoquinone oxidoreductase that uses light energy to abstract electrons from H(2)O, generating O(2) and a proton gradient subsequently used for ATP formation. It consists of a core antenna complex that captures photons, and an electron transfer chain that converts photonic excitation into a charge separation. The D1/D2 (PsbA/PsbD) reaction center heterodimer binds P680, the primary electron donor of PSII as well as several subsequent electron acceptors. D2 is needed for assembly of a stable PSII complex. This Parasynechococcus marenigrum (strain WH8102) protein is Photosystem II D2 protein.